The sequence spans 326 residues: WRKY transcription factor 8 (326 aa).

The disordered stretch occupies residues 115–172 (VRVSASPSSSEADHHPGEDSGKIRKKREVRDGGEDDQRSQKVVKTKKKEEKKKEPRVS). Composition is skewed to basic and acidic residues over residues 125 to 153 (EADH…DQRS) and 161 to 170 (KKEEKKKEPR). The segment at residues 177–242 (TEVDHLEDGY…YESQHNHPIP (66 aa)) is a DNA-binding region (WRKY).

The protein belongs to the WRKY group II-c family. In terms of assembly, interacts with VQ9 (via N-terminus). In terms of tissue distribution, highly expressed in roots and at lower levels in rosette leaves, cauline leaves, stems, flowers and siliques.

Its subcellular location is the nucleus. Functionally, transcription factor. Interacts specifically with the W box (5'-TTGAC[CT]-3'), a frequently occurring stress-responsive cis-acting element. Functions as a positive regulator of salt stress response. Binds the W box of LTI78/RD29A stress-response gene and directly regulates its transcription under salt stress. Functions antagonistically with VQ9 to regulate sodium and potassium homeostasis under salt stress by regulating the expression of downstream SOS (SALT OVERLY SENSITIVE) stress-responsive genes. The DNA-binding activity of WRKY8 is decreased by VQ9. Functions as a negative regulator of basal resistance to the bacterial pathogen P.syringae and as positive regulator of resistance to the fungal pathogen to B.cinerea. Functions as a positive regulator of defense response againt tobamovirus (TMV) by regulating both the abscisic acid and ethylene signaling pathways. Positively regulates ABI4 expression and negatively modulates ACS6 and ERF104 expression by directly binding to the W box consensus motifs within their promoters. This is WRKY transcription factor 8 (WRKY8) from Arabidopsis thaliana (Mouse-ear cress).